A 287-amino-acid chain; its full sequence is Protein REVEILLE 2 (287 aa).

The 55-residue stretch at 31 to 85 folds into the HTH myb-type domain; it reads TITKQREKWTEAEHEKFVEALKLYGRAWRRIEEHVGTKTAVQIRSHAQKFFTKVA. Positions 58-81 form a DNA-binding region, H-T-H motif; sequence WRRIEEHVGTKTAVQIRSHAQKFF. The tract at residues 134-177 is disordered; the sequence is QDEDNRSPTSVLSAHGSDGLGSIGSNSPNSSSAELSSHTEESLS. A compositionally biased stretch (low complexity) spans 156–169; the sequence is IGSNSPNSSSAELS.

It is found in the nucleus. Positive regulator for cold-responsive gene expression and cold tolerance. Part of a regulatory feedback loop that controls a subset of the circadian outputs and modulates the central oscillator. Negatively self-regulates its own expression. This is Protein REVEILLE 2 (RVE2) from Arabidopsis thaliana (Mouse-ear cress).